Here is a 282-residue protein sequence, read N- to C-terminus: tRNA (guanine-N(7)-)-methyltransferase (282 aa).

Residues 1–29 (MPHAPAKRQKREEYKNALHEDESNAALPK) form a disordered region. The span at 10 to 22 (KREEYKNALHEDE) shows a compositional bias: basic and acidic residues. S-adenosyl-L-methionine is bound by residues glycine 104, 153-154 (NT), and cysteine 173. Aspartate 176 is an active-site residue. An S-adenosyl-L-methionine-binding site is contributed by 255–257 (TEE).

This sequence belongs to the class I-like SAM-binding methyltransferase superfamily. TrmB family. Forms a complex with TRM82.

The protein resides in the nucleus. It carries out the reaction guanosine(46) in tRNA + S-adenosyl-L-methionine = N(7)-methylguanosine(46) in tRNA + S-adenosyl-L-homocysteine. It participates in tRNA modification; N(7)-methylguanine-tRNA biosynthesis. Catalyzes the formation of N(7)-methylguanine at position 46 (m7G46) in tRNA. In Phaeosphaeria nodorum (strain SN15 / ATCC MYA-4574 / FGSC 10173) (Glume blotch fungus), this protein is tRNA (guanine-N(7)-)-methyltransferase.